We begin with the raw amino-acid sequence, 960 residues long: Leucine--tRNA ligase (960 aa).

Positions P71–H82 match the 'HIGH' region motif. The short motif at K729–S733 is the 'KMSKS' region element. Residue K732 participates in ATP binding.

Belongs to the class-I aminoacyl-tRNA synthetase family.

The protein localises to the cytoplasm. The enzyme catalyses tRNA(Leu) + L-leucine + ATP = L-leucyl-tRNA(Leu) + AMP + diphosphate. This Corynebacterium diphtheriae (strain ATCC 700971 / NCTC 13129 / Biotype gravis) protein is Leucine--tRNA ligase.